Reading from the N-terminus, the 174-residue chain is Methionine-R-sulfoxide reductase B2, mitochondrial (174 aa).

The N-terminal 61 residues, 1–61 (MARLLRALRG…PEQFYVTREK (61 aa)), are a transit peptide targeting the mitochondrion. One can recognise a MsrB domain in the interval 62–172 (GTEAPFSGMY…NSVALKFKPS (111 aa)). Residues C82, C85, C138, and C141 each coordinate Zn(2+). Residue C161 is the Nucleophile of the active site.

Belongs to the MsrB Met sulfoxide reductase family. Requires Zn(2+) as cofactor.

Its subcellular location is the mitochondrion. The catalysed reaction is L-methionyl-[protein] + [thioredoxin]-disulfide + H2O = L-methionyl-(R)-S-oxide-[protein] + [thioredoxin]-dithiol. It catalyses the reaction [thioredoxin]-disulfide + L-methionine + H2O = L-methionine (R)-S-oxide + [thioredoxin]-dithiol. Functionally, methionine-sulfoxide reductase that specifically reduces methionine (R)-sulfoxide back to methionine. While in many cases, methionine oxidation is the result of random oxidation following oxidative stress, methionine oxidation is also a post-translational modification that takes place on specific residue. Upon oxidative stress, may play a role in the preservation of mitochondrial integrity by decreasing the intracellular reactive oxygen species build-up through its scavenging role, hence contributing to cell survival and protein maintenance. The chain is Methionine-R-sulfoxide reductase B2, mitochondrial (Msrb2) from Rattus norvegicus (Rat).